A 279-amino-acid chain; its full sequence is S-methyl-5'-thioadenosine phosphorylase (279 aa).

Residues serine 13, 55 to 56, and 88 to 89 each bind phosphate; these read RH and TA. Methionine 191 contacts substrate. A phosphate-binding site is contributed by threonine 192. 215–217 provides a ligand contact to substrate; the sequence is DYD.

The protein belongs to the PNP/MTAP phosphorylase family. MTAP subfamily. As to quaternary structure, homotrimer.

Its subcellular location is the cytoplasm. The protein resides in the nucleus. It catalyses the reaction S-methyl-5'-thioadenosine + phosphate = 5-(methylsulfanyl)-alpha-D-ribose 1-phosphate + adenine. Its pathway is amino-acid biosynthesis; L-methionine biosynthesis via salvage pathway; S-methyl-5-thio-alpha-D-ribose 1-phosphate from S-methyl-5'-thioadenosine (phosphorylase route): step 1/1. In terms of biological role, catalyzes the reversible phosphorylation of S-methyl-5'-thioadenosine (MTA) to adenine and 5-methylthioribose-1-phosphate. Involved in the breakdown of MTA, a major by-product of polyamine biosynthesis. Responsible for the first step in the methionine salvage pathway after MTA has been generated from S-adenosylmethionine. Has broad substrate specificity with 6-aminopurine nucleosides as preferred substrates. The polypeptide is S-methyl-5'-thioadenosine phosphorylase (Anopheles darlingi (Mosquito)).